Here is a 231-residue protein sequence, read N- to C-terminus: Small ribosomal subunit protein uS3 (231 aa).

The 69-residue stretch at 39–107 folds into the KH type-2 domain; the sequence is IRKFLKAKLY…DVTINIKEER (69 aa).

This sequence belongs to the universal ribosomal protein uS3 family. Part of the 30S ribosomal subunit. Forms a tight complex with proteins S10 and S14.

In terms of biological role, binds the lower part of the 30S subunit head. Binds mRNA in the 70S ribosome, positioning it for translation. The protein is Small ribosomal subunit protein uS3 of Campylobacter hominis (strain ATCC BAA-381 / DSM 21671 / CCUG 45161 / LMG 19568 / NCTC 13146 / CH001A).